The following is a 99-amino-acid chain: Large ribosomal subunit protein uL23 (99 aa).

This sequence belongs to the universal ribosomal protein uL23 family. As to quaternary structure, part of the 50S ribosomal subunit. Contacts protein L29, and trigger factor when it is bound to the ribosome.

One of the early assembly proteins it binds 23S rRNA. One of the proteins that surrounds the polypeptide exit tunnel on the outside of the ribosome. Forms the main docking site for trigger factor binding to the ribosome. This is Large ribosomal subunit protein uL23 from Clavibacter michiganensis subsp. michiganensis (strain NCPPB 382).